The sequence spans 91 residues: Protein LURE 1.6 (91 aa).

Positions methionine 1 to serine 20 are cleaved as a signal peptide. 3 disulfide bridges follow: cysteine 59-cysteine 76, cysteine 62-cysteine 83, and cysteine 66-cysteine 85.

The protein belongs to the DEFL family. In terms of tissue distribution, expressed in the pistil. Detected in the synergid cells.

Its subcellular location is the secreted. In terms of biological role, pollen tube attractants guiding pollen tubes to the ovular micropyle. This is Protein LURE 1.6 from Arabidopsis thaliana (Mouse-ear cress).